The chain runs to 378 residues: Gibberellin 20 oxidase 2 (378 aa).

Positions 1–10 (MAILCTTTSP) are enriched in polar residues. Positions 1–26 (MAILCTTTSPAEKEHEPKQDLEKDQT) are disordered. Residues 11–25 (AEKEHEPKQDLEKDQ) are compositionally biased toward basic and acidic residues. Residues 220–320 (ENDSIMRLNH…RKSMAFFLCP (101 aa)) enclose the Fe2OG dioxygenase domain. Fe cation contacts are provided by histidine 245, aspartate 247, and histidine 301. The active site involves arginine 311.

This sequence belongs to the iron/ascorbate-dependent oxidoreductase family. GA20OX subfamily. Fe(2+) serves as cofactor. The cofactor is L-ascorbate. In terms of tissue distribution, expressed in inflorescence and developing siliques. Detected in seeds, roots, cotyledons and leaves. In seeds, specifically detected at the rim of the embryo and the outer integument.

The enzyme catalyses gibberellin A12 + 2 2-oxoglutarate + 3 O2 + H(+) = gibberellin A9 + 2 succinate + 3 CO2 + 2 H2O. It carries out the reaction gibberellin A12 + 2-oxoglutarate + O2 = gibberellin A15 + succinate + CO2. The catalysed reaction is gibberellin A15 + 2-oxoglutarate + O2 = gibberellin A24 + succinate + CO2 + H2O. It catalyses the reaction gibberellin A53 + 2-oxoglutarate + O2 = gibberellin A44 + succinate + CO2. The enzyme catalyses gibberellin A12 + 3 2-oxoglutarate + 3 O2 = gibberellin A25 + 3 succinate + 3 CO2 + H2O + H(+). The protein operates within plant hormone biosynthesis; gibberellin biosynthesis. Its function is as follows. Key oxidase enzyme in the biosynthesis of gibberellin that catalyzes the conversion of GA12 to GA9, via a three-step oxidation at C-20 of the GA skeleton, and GA25 is also formed as a minor product. GA53 is less effectively oxidized than GA12 and is only oxidized one step to GA44. Involved in the promotion of the floral transition, fertility and silique elongation, but plays only a minor role in elongation of seedling organs. Acts redundantly with GA20OX1. The chain is Gibberellin 20 oxidase 2 (GA20OX2) from Arabidopsis thaliana (Mouse-ear cress).